Reading from the N-terminus, the 535-residue chain is T-box transcription factor TBX21 (535 aa).

Residues 1–62 (MGIVEPGCGD…SLGSPYPGGA (62 aa)) form a disordered region. Ser-53 is subject to Phosphoserine. Tyr-77 carries the phosphotyrosine modification. The tract at residues 83-109 (AAGFPGAGESFPPPADAEGYQPGEGYA) is disordered. Tyr-118 carries the phosphotyrosine modification. Residues 141 to 326 (LNNHLLWSKF…NNPFAKGFRE (186 aa)) constitute a DNA-binding region (T-box). A Phosphotyrosine; by ABL1 modification is found at Tyr-220. Ser-225 is modified (phosphoserine). Position 266 is a phosphotyrosine; by ABL1 (Tyr-266). Residue Thr-303 is modified to Phosphothreonine. The residue at position 305 (Tyr-305) is a Phosphotyrosine; by ABL1. Lys-314 participates in a covalent cross-link: Glycyl lysine isopeptide (Lys-Gly) (interchain with G-Cter in ubiquitin). The disordered stretch occupies residues 449–535 (RPMRTLPMEP…EGQFYNYFPN (87 aa)). Low complexity predominate over residues 503–520 (SPYPSSGDSSSPAGAPSP). Ser-513 carries the post-translational modification Phosphoserine. Tyr-530 is modified (phosphotyrosine; by ITK).

In terms of assembly, interacts with RUNX1, RUNX3, ITK, ABL1, RELA, CDK9 and KDM6B. The phosphorylated form (at Thr-303) interacts with NFATC2. Interacts with SMARCA4 in a KDM6B-dependent manner. Interacts with CCTN1. Interacts with USP10. The phosphorylated form (at Tyr-530) interacts with GATA3. Phosphorylations at Ser-53, Tyr-77, Ser-225 and Ser-513 are regulated by mTORC1. Phosphorylation at Tyr-530 is essential for its interaction GATA3. Phosphorylation at Tyr-220, Tyr-266 and Tyr-305 enhances its transcriptional activator activity. Phosphorylation at Thr-303 is required for its interaction with NFATC2. In terms of processing, ubiquitinated at Lys-314, leading to its degradation by the proteasome. Ubiquitination is essential for controlling protein stability, binding to the T-box-binding element of the IFN-gamma promoter, and for interaction with NFATC2 through induction of phosphorylation at Thr-303. Deubiquitinated by USP10 leading to its stabilization. As to expression, T-cell specific.

Its subcellular location is the nucleus. In terms of biological role, lineage-defining transcription factor which initiates Th1 lineage development from naive Th precursor cells both by activating Th1 genetic programs and by repressing the opposing Th2 and Th17 genetic programs. Activates transcription of a set of genes important for Th1 cell function, including those encoding IFN-gamma and the chemokine receptor CXCR3. Induces permissive chromatin accessibilty and CpG methylation in IFNG. Activates IFNG and CXCR3 genes in part by recruiting chromatin remodeling complexes including KDM6B, a SMARCA4-containing SWI/SNF-complex, and an H3K4me2-methyltransferase complex to their promoters and all of these complexes serve to establish a more permissive chromatin state conducive with transcriptional activation. Can activate Th1 genes also via recruitment of Mediator complex and P-TEFb (composed of CDK9 and CCNT1/cyclin-T1) in the form of the super elongation complex (SEC) to super-enhancers and associated genes in activated Th1 cells. Inhibits the Th17 cell lineage commitment by blocking RUNX1-mediated transactivation of Th17 cell-specific transcriptinal regulator RORC. Inhibits the Th2 cell lineage commitment by suppressing the production of Th2 cytokines, such as IL-4, IL-5, and IL- 13, via repression of transcriptional regulators GATA3 and NFATC2. Protects Th1 cells from amplifying aberrant type-I IFN response in an IFN-gamma abundant microenvironment by acting as a repressor of type-I IFN transcription factors and type-I IFN-stimulated genes. Acts as a regulator of antiviral B-cell responses; controls chronic viral infection by promoting the antiviral antibody IgG2a isotype switching and via regulation of a broad antiviral gene expression program. Required for the correct development of natural killer (NK) and mucosal-associated invariant T (MAIT) cells. This chain is T-box transcription factor TBX21 (TBX21), found in Homo sapiens (Human).